Consider the following 447-residue polypeptide: Na(+)-translocating NADH-quinone reductase subunit A (447 aa).

The protein belongs to the NqrA family. Composed of six subunits; NqrA, NqrB, NqrC, NqrD, NqrE and NqrF.

The enzyme catalyses a ubiquinone + n Na(+)(in) + NADH + H(+) = a ubiquinol + n Na(+)(out) + NAD(+). NQR complex catalyzes the reduction of ubiquinone-1 to ubiquinol by two successive reactions, coupled with the transport of Na(+) ions from the cytoplasm to the periplasm. NqrA to NqrE are probably involved in the second step, the conversion of ubisemiquinone to ubiquinol. The chain is Na(+)-translocating NADH-quinone reductase subunit A from Hahella chejuensis (strain KCTC 2396).